The primary structure comprises 921 residues: Translation initiation factor IF-2 (921 aa).

The segment at 1-296 (MADNNTPGDK…PGPQKQRGRL (296 aa)) is disordered. Over residues 80–89 (RPSGPRPGSS) the composition is skewed to low complexity. A compositionally biased stretch (basic and acidic residues) spans 116-182 (ARVRDMEERR…AKKRFGEGEA (67 aa)). Low complexity predominate over residues 183 to 257 (PRPATAAPQQ…LGRAPGVAAG (75 aa)). Residues 417–586 (PRSPVVTVMG…MIALQADILD (170 aa)) form the tr-type G domain. The G1 stretch occupies residues 426 to 433 (GHVDHGKT). 426–433 (GHVDHGKT) serves as a coordination point for GTP. The interval 451-455 (GITQH) is G2. The tract at residues 474 to 477 (DTPG) is G3. GTP contacts are provided by residues 474–478 (DTPGH) and 528–531 (NKID). The interval 528–531 (NKID) is G4. The tract at residues 564 to 566 (SAK) is G5.

The protein belongs to the TRAFAC class translation factor GTPase superfamily. Classic translation factor GTPase family. IF-2 subfamily.

The protein resides in the cytoplasm. One of the essential components for the initiation of protein synthesis. Protects formylmethionyl-tRNA from spontaneous hydrolysis and promotes its binding to the 30S ribosomal subunits. Also involved in the hydrolysis of GTP during the formation of the 70S ribosomal complex. This chain is Translation initiation factor IF-2, found in Bradyrhizobium sp. (strain BTAi1 / ATCC BAA-1182).